The chain runs to 369 residues: Probable dual-specificity RNA methyltransferase RlmN (369 aa).

Glu-108 acts as the Proton acceptor in catalysis. The Radical SAM core domain occupies 114–351 (YPDRATLCIS…LAQGVSCTVR (238 aa)). Residues Cys-121 and Cys-362 are joined by a disulfide bond. [4Fe-4S] cluster is bound by residues Cys-128, Cys-132, and Cys-135. S-adenosyl-L-methionine contacts are provided by residues 183–184 (GE), Ser-217, 240–242 (SLH), and Asn-319. Cys-362 serves as the catalytic S-methylcysteine intermediate.

Belongs to the radical SAM superfamily. RlmN family. Requires [4Fe-4S] cluster as cofactor.

The protein resides in the cytoplasm. The catalysed reaction is adenosine(2503) in 23S rRNA + 2 reduced [2Fe-2S]-[ferredoxin] + 2 S-adenosyl-L-methionine = 2-methyladenosine(2503) in 23S rRNA + 5'-deoxyadenosine + L-methionine + 2 oxidized [2Fe-2S]-[ferredoxin] + S-adenosyl-L-homocysteine. The enzyme catalyses adenosine(37) in tRNA + 2 reduced [2Fe-2S]-[ferredoxin] + 2 S-adenosyl-L-methionine = 2-methyladenosine(37) in tRNA + 5'-deoxyadenosine + L-methionine + 2 oxidized [2Fe-2S]-[ferredoxin] + S-adenosyl-L-homocysteine. In terms of biological role, specifically methylates position 2 of adenine 2503 in 23S rRNA and position 2 of adenine 37 in tRNAs. The protein is Probable dual-specificity RNA methyltransferase RlmN of Rhodococcus jostii (strain RHA1).